The sequence spans 360 residues: Phospho-N-acetylmuramoyl-pentapeptide-transferase (360 aa).

10 helical membrane-spanning segments follow: residues 21–41 (YITVRANLALLTALFISLWIG), 73–93 (TMGGVMILFSIGVSTLLWANL), 94–114 (ANPYIWVCLFVLFGYGAIGFV), 132–152 (WKYFWMSVVALVAILWLYWLG), 168–188 (IMPQLGLFYIVLSYFVIVGTG), 199–219 (GLAIMPTALVAGAFALIAWAT), 239–259 (VVVFCTAIVGASLGFLWFNTY), 263–283 (VFMGDVGSLALGGALGVVAIL), 288–308 (FLLVIMGGVFVVEALSVILQV), and 338–358 (VIIRFWIISLMLVLMGLVTLK).

Belongs to the glycosyltransferase 4 family. MraY subfamily. Mg(2+) is required as a cofactor.

The protein localises to the cell inner membrane. The enzyme catalyses UDP-N-acetyl-alpha-D-muramoyl-L-alanyl-gamma-D-glutamyl-meso-2,6-diaminopimeloyl-D-alanyl-D-alanine + di-trans,octa-cis-undecaprenyl phosphate = di-trans,octa-cis-undecaprenyl diphospho-N-acetyl-alpha-D-muramoyl-L-alanyl-D-glutamyl-meso-2,6-diaminopimeloyl-D-alanyl-D-alanine + UMP. Its pathway is cell wall biogenesis; peptidoglycan biosynthesis. In terms of biological role, catalyzes the initial step of the lipid cycle reactions in the biosynthesis of the cell wall peptidoglycan: transfers peptidoglycan precursor phospho-MurNAc-pentapeptide from UDP-MurNAc-pentapeptide onto the lipid carrier undecaprenyl phosphate, yielding undecaprenyl-pyrophosphoryl-MurNAc-pentapeptide, known as lipid I. The protein is Phospho-N-acetylmuramoyl-pentapeptide-transferase of Haemophilus influenzae (strain ATCC 51907 / DSM 11121 / KW20 / Rd).